Consider the following 150-residue polypeptide: uncharacterized protein (150 aa).

Belongs to the aspartate/glutamate racemases family.

This is an uncharacterized protein from Pectobacterium carotovorum subsp. carotovorum (Erwinia carotovora subsp. carotovora).